Here is a 427-residue protein sequence, read N- to C-terminus: MSMIEEIYAREIFDSRGNPTVEVELYTESGAYGFARVPSGASTGVHEALELRDGEDRFGGKGVRKACSKVNEEIGPNLVGMDVTFQSAIDRALLELDGTDNKENLGANAMLGVSLAAARASAEFLGLPLYQVLGGVSSSTLPIPQMNILNGGEHADNNVDIQEFMIMPIRANNFQHAMRMGVEIFHALKNVLKDEGLSTSVGDEGGFAPDLKSNKEALEYIITAIEKVGYKPGEQVMLAIDAAASELYQGDKYHLEGEGKSLTADEMIDLYQDLVENYPIISIEDGLSEDDWEGWKKMTEKFQGKIQLVGDDLFVTNTDRLTRGIKEDIANSILIKLNQIGTVTETLEAIELAKKNGYTSVISHRSGETDDPFIADLAVATNAGQIKTGAPSRMDRVAKYNQLIRISEELYGVSRYPGMGSFYNLEV.

Q162 serves as a coordination point for (2R)-2-phosphoglycerate. The Proton donor role is filled by E204. Mg(2+) is bound by residues D241, E284, and D311. 4 residues coordinate (2R)-2-phosphoglycerate: K336, R365, S366, and K387. K336 serves as the catalytic Proton acceptor.

The protein belongs to the enolase family. Mg(2+) is required as a cofactor.

Its subcellular location is the cytoplasm. It localises to the secreted. It is found in the cell surface. The enzyme catalyses (2R)-2-phosphoglycerate = phosphoenolpyruvate + H2O. The protein operates within carbohydrate degradation; glycolysis; pyruvate from D-glyceraldehyde 3-phosphate: step 4/5. In terms of biological role, catalyzes the reversible conversion of 2-phosphoglycerate (2-PG) into phosphoenolpyruvate (PEP). It is essential for the degradation of carbohydrates via glycolysis. The protein is Enolase of Natranaerobius thermophilus (strain ATCC BAA-1301 / DSM 18059 / JW/NM-WN-LF).